The primary structure comprises 302 residues: UTP--glucose-1-phosphate uridylyltransferase (302 aa).

This sequence belongs to the UDPGP type 2 family. As to quaternary structure, homotetramer or homopentamer. Mg(2+) is required as a cofactor.

The enzyme catalyses alpha-D-glucose 1-phosphate + UTP + H(+) = UDP-alpha-D-glucose + diphosphate. Its function is as follows. May play a role in stationary phase survival. This is UTP--glucose-1-phosphate uridylyltransferase (galU) from Escherichia coli O157:H7.